Reading from the N-terminus, the 337-residue chain is MKKMPLFSKSHKNPAEIVKILKDNLAILEKQDKKTDKASEEVSKSLQAMKEILCGTNEKEPPTEAVAQLAQELYSSGLLVTLIADLQLIDFEGKKDVTQIFNNILRRQIGTRSPTVEYISAHPHILFMLLKGYEAPQIALRCGIMLRECIRHEPLAKIILFSNQFRDFFKYVELSTFDIASDAFATFKDLLTRHKVLVADFLEQNYDTIFEDYEKLLQSENYVTKRQSLKLLGELILDRHNFAIMTKYISKPENLKLMMNLLRDKSPNIQFEAFHVFKVFVASPHKTQPIVEILLKNQPKLIEFLSSFQKERTDDEQFADEKNYLIKQIRDLKKTAP.

This sequence belongs to the Mo25 family. Component of a trimeric complex composed of STK11/LKB1, STRAD (STRADA or STRADB) and CAB39/MO25 (CAB39/MO25alpha or CAB39L/MO25beta): the complex tethers STK11/LKB1 in the cytoplasm and stimulates its catalytic activity.

In terms of biological role, component of a complex that binds and activates STK11/LKB1. In the complex, required to stabilize the interaction between CAB39/MO25 (CAB39/MO25alpha or CAB39L/MO25beta) and STK11/LKB1. The sequence is that of Calcium-binding protein 39-like (CAB39L) from Homo sapiens (Human).